The chain runs to 229 residues: Large ribosomal subunit protein uL1 (229 aa).

Belongs to the universal ribosomal protein uL1 family. As to quaternary structure, part of the 50S ribosomal subunit.

In terms of biological role, binds directly to 23S rRNA. The L1 stalk is quite mobile in the ribosome, and is involved in E site tRNA release. Its function is as follows. Protein L1 is also a translational repressor protein, it controls the translation of the L11 operon by binding to its mRNA. In Clostridium perfringens (strain ATCC 13124 / DSM 756 / JCM 1290 / NCIMB 6125 / NCTC 8237 / Type A), this protein is Large ribosomal subunit protein uL1.